The following is a 191-amino-acid chain: CASP-like protein 2U3 (191 aa).

At 1–25 the chain is on the cytoplasmic side; that stretch reads MGAYDGAEAPRAAPASTAANSRPSR. Residues 26–46 form a helical membrane-spanning segment; sequence LLLLHSLLLRLVAVVVSILVI. The Extracellular portion of the chain corresponds to 47–68; sequence AVMVHAKQRVMIFKAEWDNSKA. A helical transmembrane segment spans residues 69-89; it reads FVALVAISAICLGYSFLQFIL. Over 90–114 the chain is Cytoplasmic; it reads SAFHLCSKSWKSPTKCWAWMNFIAD. The helical transmembrane segment at 115–135 threads the bilayer; the sequence is QILTYAMLGAAAAAAELAYIA. Residues 136 to 157 are Extracellular-facing; that stretch reads KNGSSRAQWQPICSTFNTFCTR. Asn137 carries N-linked (GlcNAc...) asparagine glycosylation. Residues 158–178 form a helical membrane-spanning segment; it reads AGASIILSFIAVLALANSSAI. The Cytoplasmic portion of the chain corresponds to 179 to 191; it reads SAYHLFRRPSSSV.

This sequence belongs to the Casparian strip membrane proteins (CASP) family. Homodimer and heterodimers.

Its subcellular location is the cell membrane. The chain is CASP-like protein 2U3 from Selaginella moellendorffii (Spikemoss).